Here is a 343-residue protein sequence, read N- to C-terminus: Probable dual-specificity RNA methyltransferase RlmN (343 aa).

Residue Glu90 is the Proton acceptor of the active site. One can recognise a Radical SAM core domain in the interval His96 to Asp325. A disulfide bridge links Cys103 with Cys330. [4Fe-4S] cluster-binding residues include Cys110, Cys114, and Cys117. S-adenosyl-L-methionine-binding positions include Gly157 to Glu158, Ser189, Ser212 to His214, and Asn288. Catalysis depends on Cys330, which acts as the S-methylcysteine intermediate.

It belongs to the radical SAM superfamily. RlmN family. The cofactor is [4Fe-4S] cluster.

Its subcellular location is the cytoplasm. The catalysed reaction is adenosine(2503) in 23S rRNA + 2 reduced [2Fe-2S]-[ferredoxin] + 2 S-adenosyl-L-methionine = 2-methyladenosine(2503) in 23S rRNA + 5'-deoxyadenosine + L-methionine + 2 oxidized [2Fe-2S]-[ferredoxin] + S-adenosyl-L-homocysteine. It carries out the reaction adenosine(37) in tRNA + 2 reduced [2Fe-2S]-[ferredoxin] + 2 S-adenosyl-L-methionine = 2-methyladenosine(37) in tRNA + 5'-deoxyadenosine + L-methionine + 2 oxidized [2Fe-2S]-[ferredoxin] + S-adenosyl-L-homocysteine. In terms of biological role, specifically methylates position 2 of adenine 2503 in 23S rRNA and position 2 of adenine 37 in tRNAs. The sequence is that of Probable dual-specificity RNA methyltransferase RlmN from Pseudothermotoga lettingae (strain ATCC BAA-301 / DSM 14385 / NBRC 107922 / TMO) (Thermotoga lettingae).